Here is an 84-residue protein sequence, read N- to C-terminus: Conotoxin Am6.1 (84 aa).

The signal sequence occupies residues 1–19; the sequence is MEKLTILLLVAAVLMSTHA. Residues 20 to 47 constitute a propeptide that is removed on maturation; the sequence is MFQGGGEKSRKAINFSETRKLARNKQKR. 3 disulfide bridges follow: Cys-48/Cys-62, Cys-55/Cys-66, and Cys-61/Cys-71. Trp-51 is modified (6'-bromotryptophan; in Am6.1b). 4-carboxyglutamate; partial; in Am6.1b and Am6.1c is present on residues Glu-60 and Glu-64. Positions 78–84 are excised as a propeptide; it reads RTTSHPI.

This sequence belongs to the conotoxin O2 family. In terms of processing, three forms of this peptides have been described. The unmodified Am6.1a (Am3286) is not detected in the venom; Am6.1b (Am3408) is only Trp brominated, while Am6.1c (Am3452) is both Trp brominated and Glu gamma-carboxyglutamated. Both Am6.1b and Am6.1c are detected in the venom. In terms of tissue distribution, expressed by the venom duct.

The protein resides in the secreted. Functionally, gamma-conotoxins may act on voltage-gated non-specific cation pacemaker channels (HCN). In Conus amadis (Amadis cone), this protein is Conotoxin Am6.1.